The following is a 214-amino-acid chain: Large ribosomal subunit protein bL25 (214 aa).

Disordered regions lie at residues 1–23 (MSNEFLLNAESRSDTGKGASRRL) and 182–214 (DHDQPVAAVHQPKVRASSDDDDAAEGEEAASEE). Acidic residues predominate over residues 200–214 (DDDDAAEGEEAASEE).

The protein belongs to the bacterial ribosomal protein bL25 family. CTC subfamily. As to quaternary structure, part of the 50S ribosomal subunit; part of the 5S rRNA/L5/L18/L25 subcomplex. Contacts the 5S rRNA. Binds to the 5S rRNA independently of L5 and L18.

In terms of biological role, this is one of the proteins that binds to the 5S RNA in the ribosome where it forms part of the central protuberance. This is Large ribosomal subunit protein bL25 from Alcanivorax borkumensis (strain ATCC 700651 / DSM 11573 / NCIMB 13689 / SK2).